The sequence spans 168 residues: Zinc finger A20 and AN1 domain-containing stress-associated protein 1 (168 aa).

The A20-type zinc-finger motif lies at 13–47; it reads PSEPKLCVKGCGFFGSPSNMNLCSKCYRDIRATEE. Zn(2+) is bound by residues C19, C23, C35, and C38. Residues 49 to 105 are disordered; it reads TASAKAAVEKSLNPNKPKTQPQQSQEITQGVLGSGSSSSSTRGGDSAAAPLDPPKST. Polar residues predominate over residues 60-76; sequence LNPNKPKTQPQQSQEIT. The segment covering 82-94 has biased composition (low complexity); that stretch reads SGSSSSSTRGGDS. Residues 103–149 form an AN1-type zinc finger; sequence KSTATRCLSCNKKVGVTGFKCRCGSTFCGTHRYPESHECQFDFKGVA. Residues C109, C112, C123, C125, C130, H133, H139, and C141 each coordinate Zn(2+).

Functionally, may be involved in environmental stress response. The polypeptide is Zinc finger A20 and AN1 domain-containing stress-associated protein 1 (SAP1) (Arabidopsis thaliana (Mouse-ear cress)).